The chain runs to 696 residues: Polyribonucleotide nucleotidyltransferase (696 aa).

Positions 486 and 492 each coordinate Mg(2+). The KH domain maps to 553-612 (PRIIVRNIPKDRIGELIGPGGKNVRGISELTGAELYIEDDGRVTISGSNQESAEKAAKMV). The region spanning 622–690 (GKIYEGKVKR…KTGKIDLSRK (69 aa)) is the S1 motif domain.

It belongs to the polyribonucleotide nucleotidyltransferase family. The cofactor is Mg(2+).

The protein localises to the cytoplasm. It carries out the reaction RNA(n+1) + phosphate = RNA(n) + a ribonucleoside 5'-diphosphate. Functionally, involved in mRNA degradation. Catalyzes the phosphorolysis of single-stranded polyribonucleotides processively in the 3'- to 5'-direction. The polypeptide is Polyribonucleotide nucleotidyltransferase (Leptospira borgpetersenii serovar Hardjo-bovis (strain L550)).